The following is a 324-amino-acid chain: uncharacterized protein (324 aa).

Residues 1-58 enclose the HTH lysR-type domain; sequence MDIKVMEYAAEIARRQSFTKAAEHLHIAQPSLSQQIKKLEAELGLTLFHRSHGSVTLT. Residues 18 to 37 constitute a DNA-binding region (H-T-H motif); that stretch reads FTKAAEHLHIAQPSLSQQIK.

Belongs to the LysR transcriptional regulatory family.

This is an uncharacterized protein from Bacillus subtilis (strain 168).